The primary structure comprises 165 residues: Large ribosomal subunit protein uL10 (165 aa).

It belongs to the universal ribosomal protein uL10 family. In terms of assembly, part of the ribosomal stalk of the 50S ribosomal subunit. The N-terminus interacts with L11 and the large rRNA to form the base of the stalk. The C-terminus forms an elongated spine to which L12 dimers bind in a sequential fashion forming a multimeric L10(L12)X complex.

In terms of biological role, forms part of the ribosomal stalk, playing a central role in the interaction of the ribosome with GTP-bound translation factors. This is Large ribosomal subunit protein uL10 from Burkholderia thailandensis (strain ATCC 700388 / DSM 13276 / CCUG 48851 / CIP 106301 / E264).